A 232-amino-acid polypeptide reads, in one-letter code: Large ribosomal subunit protein uL1 (232 aa).

This sequence belongs to the universal ribosomal protein uL1 family. As to quaternary structure, part of the 50S ribosomal subunit.

Binds directly to 23S rRNA. The L1 stalk is quite mobile in the ribosome, and is involved in E site tRNA release. Functionally, protein L1 is also a translational repressor protein, it controls the translation of the L11 operon by binding to its mRNA. The polypeptide is Large ribosomal subunit protein uL1 (Stenotrophomonas maltophilia (strain K279a)).